A 449-amino-acid chain; its full sequence is Trigger factor (449 aa).

In terms of domain architecture, PPIase FKBP-type spans 173 to 258; the sequence is GDRVTVDFVG…LKKVEWPHLP (86 aa).

This sequence belongs to the FKBP-type PPIase family. Tig subfamily.

Its subcellular location is the cytoplasm. It catalyses the reaction [protein]-peptidylproline (omega=180) = [protein]-peptidylproline (omega=0). Involved in protein export. Acts as a chaperone by maintaining the newly synthesized protein in an open conformation. Functions as a peptidyl-prolyl cis-trans isomerase. The protein is Trigger factor of Burkholderia pseudomallei (strain 1710b).